The chain runs to 287 residues: Protease HtpX (287 aa).

2 helical membrane passes run 4-24 (IFLLIVTNLAVLLVASIVMSI) and 33-53 (GGLLVFAAIFGFGGAFISLAI). H139 is a binding site for Zn(2+). Residue E140 is part of the active site. Residue H143 participates in Zn(2+) binding. 2 helical membrane passes run 154 to 174 (LIQGVVNTFVIFAARVVAGII) and 195 to 215 (AVVFVLDMLFGILASIIVAYF). E220 contributes to the Zn(2+) binding site.

Belongs to the peptidase M48B family. Zn(2+) is required as a cofactor.

The protein localises to the cell inner membrane. The protein is Protease HtpX of Shewanella oneidensis (strain ATCC 700550 / JCM 31522 / CIP 106686 / LMG 19005 / NCIMB 14063 / MR-1).